The following is a 353-amino-acid chain: Replication factor C subunit 2 (353 aa).

Met-1 is subject to N-acetylmethionine. Residues Val-28, Arg-32, 65 to 73, Asn-171, and Arg-229 each bind ATP; that span reads GPPGTGKTS.

This sequence belongs to the activator 1 small subunits family. As to quaternary structure, replication factor C (RFC) is a heteropentamer of subunits RFC1, RFC2, RFC3, RFC4 and RFC5 and forms a complex with POL30/PCNA in the presence of ATP. Component of the RAD24-RFC complex which consists of RAD14, RFC2, RFC3, RFC4 and RFC5 and associates with the checkpoint clamp DDC1:MEC3:RAD17 complex. Component of the ELG1-RFC complex which consists of ELG1, RFC2, RFC3, RFC4 and RFC5. Component of the CTF18-RFC complex, which consists of CTF18, CTF8, DCC1, RFC2, RFC3, RFC4 and RFC5. RFC2 interacts with ECO1.

It is found in the nucleus. Component of ATP-dependent clamp loader (RFC and RFC-like) complexes for DNA clamps, such as the POL30/PCNA homotrimer and the checkpoint clamp DDC1:MEC3:RAD17 complex. During a clamp loading circle, the RFC:clamp complex binds to DNA and the recognition of the double-stranded/single-stranded junction stimulates ATP hydrolysis by RFC. The complex presumably provides bipartite ATP sites in which one subunit supplies a catalytic site for hydrolysis of ATP bound to the neighboring subunit. Dissociation of RFC from the clamp leaves the clamp encircling DNA. Component of the replication factor C (RFC or activator 1) complex which loads POL30/PCNA and acts during elongation of primed DNA templates by DNA polymerase delta and epsilon. RFC has an essential but redundant activity in sister chromatid cohesion establishment. Component of the RFC-like complex CTF18-RFC which is required for efficient establishment of chromosome cohesion during S-phase and may load or unload POL30/PCNA. Component of the RFC-like RAD24-RFC complex which loads the checkpoint clamp DDC1:MEC3:RAD17 complex and is involved in DNA repair pathways. Component of the RFC-like ELG1-RFC complex which appears to have a role in DNA replication, replication fork re-start, recombination and repair. RFC2 binds ATP and single-stranded DNA. This chain is Replication factor C subunit 2 (RFC2), found in Saccharomyces cerevisiae (strain ATCC 204508 / S288c) (Baker's yeast).